The chain runs to 724 residues: Coiled-coil domain-containing protein 175 (724 aa).

Coiled-coil stretches lie at residues 131-164 (VEMSELHTKITRINDEIEFLKKKILHLQTDNTAL), 203-256 (INLE…RKET), 282-373 (VVLS…RQYK), 426-534 (ELHR…ERKL), and 565-627 (QLQV…QLRE).

The polypeptide is Coiled-coil domain-containing protein 175 (CCDC175) (Bos taurus (Bovine)).